We begin with the raw amino-acid sequence, 814 residues long: Coiled-coil and C2 domain-containing protein 1-like (814 aa).

Residues Met-1–Lys-11 are compositionally biased toward basic and acidic residues. Disordered stretches follow at residues Met-1–Pro-136 and Glu-157–Gln-263. The span at Ile-25–Ala-47 shows a compositional bias: acidic residues. Residues Asp-73–Val-85 show a composition bias toward basic and acidic residues. 2 stretches are compositionally biased toward acidic residues: residues Ser-86–Leu-100 and Leu-110–Pro-130. The DM14 1 stretch occupies residues Leu-143–Val-201. Residues Pro-205–Ala-230 show a composition bias toward low complexity. Positions Pro-231–Pro-254 are enriched in pro residues. DM14 regions lie at residues Val-256 to Pro-314 and Leu-358 to Pro-416. The stretch at Ala-351–Glu-378 forms a coiled coil. Positions Val-414–Glu-425 are enriched in pro residues. Positions Val-414–Gln-486 are disordered. The segment covering Pro-426 to Thr-462 has biased composition (low complexity). Positions Thr-475 to Gln-486 are enriched in polar residues. The DM14 4 stretch occupies residues Met-495–Pro-553. In terms of domain architecture, C2 spans Arg-633 to Tyr-772.

Belongs to the CC2D1 family. In terms of assembly, interacts (via DM14 domains 1 and 3) with shrb; the interaction is direct and blocks access to the surface involved in shrb polymerization. This interaction may be required for the ESCRT-III complex role in multivesicular body formation.

The protein localises to the cytoplasm. It is found in the cytosol. It localises to the apicolateral cell membrane. The protein resides in the cell cortex. Its subcellular location is the endosome. Its function is as follows. Phosphatidyl inositol monophosphate binding protein involved in endosomal protein sorting through regulation of the endosomal sorting required for transport (ESCRT) pathway. Required for full activity of the ESCRT-III complex core component shrb/shrub, probably by preventing its inappropriate polymerisation. Required, but not essential, for the efficient generation of intraluminal vesicles (ILVs) in multivesicular bodies (MVBs). Involved in a late stage of the endosomal pathway targeting transmembrane proteins of the plasma membrane for lysosomal degradation. Plays a critical role in regulation of multiple signal transduction pathways, including the Notch and BMP/decapentaplegic (dpp) signaling pathways, through targeting of membrane bound receptors to multivesicular bodies, isolating them from the cytoplasm and targeting them for lysosomal degradation. Involved in targeting N/Notch for endosomal degradation, negatively regulating the Notch signaling pathway. Regulates Notch signaling in imaginal disk cells and follicle cells during oogenesis and multiple developmental processes, including development of wings, veins, legs, eyes and bristles. Restricts the activity of Notch to the dorsoventral (D/V) boundary of the wing imaginal disk. In external sensory organ development regulates Notch signaling during asymmetric cell division and differentiation of sensory organ precursor cells. May be involved in regulation of apoptosis and cell growth independent of Notch signaling. Involved in targeting tkv for endosomal degradation, negatively regulating the BMP/decapentaplegic (dpp) signaling pathway. Regulates the BMP/dpp signaling pathway in follicle cells during oogenesis, but not in imaginal disk cells during wing development. May be involved in differentiation or morphogenesis of peripodial epithelial cells in the developing imaginal disk. Involved in abscission of germline cells during oogenesis. In Drosophila pseudoobscura pseudoobscura (Fruit fly), this protein is Coiled-coil and C2 domain-containing protein 1-like.